We begin with the raw amino-acid sequence, 297 residues long: HTH-type transcriptional regulator ArgP (297 aa).

Residues Pro4–Thr60 enclose the HTH lysR-type domain. Residues Phe21–Lys40 constitute a DNA-binding region (H-T-H motif).

The protein belongs to the LysR transcriptional regulatory family. In terms of assembly, homodimer.

Its function is as follows. Controls the transcription of genes involved in arginine and lysine metabolism. The chain is HTH-type transcriptional regulator ArgP from Klebsiella pneumoniae (strain 342).